Here is a 450-residue protein sequence, read N- to C-terminus: Sensor histidine kinase EnvZ (450 aa).

Residues 1-15 (MRRMRFSPRSSFART) are Cytoplasmic-facing. A helical transmembrane segment spans residues 16-35 (LLLIVTLLFVSLVTTYLVVL). Topologically, residues 36 to 158 (NFAILPSLQQ…LTEIHQGDFS (123 aa)) are periplasmic. A helical transmembrane segment spans residues 159–179 (PLFRYTLAIMLLAIGGAWLFI). Residues 180–232 (RIQNRPLVDLEHAALQVGKGIIPPPLREYGASEVRSVTRAFNHMAAGVKQLAD) enclose the HAMP domain. Residues 180 to 450 (RIQNRPLVDL…ARVQGTTKEA (271 aa)) are Cytoplasmic-facing. Positions 223–289 (MAAGVKQLAD…IIEQFIDYLR (67 aa)) are cytoplasmic dimerization domain (CDD), when dimerized forms osmosensitive core. In terms of domain architecture, Histidine kinase spans 240 to 440 (GVSHDLRTPL…SIRAWLPVPV (201 aa)). Residues His-243, 347-351 (NAARY), Asp-373, 392-393 (RG), and 402-406 (TGLGL) contribute to the ATP site. Phosphohistidine; by autocatalysis is present on His-243.

Homodimer. In terms of processing, autophosphorylated.

The protein resides in the cell inner membrane. The catalysed reaction is ATP + protein L-histidine = ADP + protein N-phospho-L-histidine.. Its function is as follows. Member of the two-component regulatory system EnvZ/OmpR involved in regulating expression of the outer membrane porins OmpC and OmpF as well as other genes. Unlike E.coli or S.typhimurium both porins are expressed constitutively. Involved in regulation of the biosynthesis of Vi polysaccharide, a capsular antigen thought to be involved in the virulence of S.typhi. Vi antigen is synthesized at low NaCl concentrations (under 0.4 M). EnvZ functions as a membrane-associated protein kinase that phosphorylates OmpR in response to environmental signals. This chain is Sensor histidine kinase EnvZ (envZ), found in Salmonella typhi.